Here is a 527-residue protein sequence, read N- to C-terminus: Peptide chain release factor 3 (527 aa).

Residues 9 to 277 (AKRRTFAIIS…AVVNWAPKPL (269 aa)) form the tr-type G domain. Residues 18 to 25 (SHPDAGKT), 86 to 90 (DTPGH), and 140 to 143 (NKLD) each bind GTP.

This sequence belongs to the TRAFAC class translation factor GTPase superfamily. Classic translation factor GTPase family. PrfC subfamily.

The protein resides in the cytoplasm. Its function is as follows. Increases the formation of ribosomal termination complexes and stimulates activities of RF-1 and RF-2. It binds guanine nucleotides and has strong preference for UGA stop codons. It may interact directly with the ribosome. The stimulation of RF-1 and RF-2 is significantly reduced by GTP and GDP, but not by GMP. In Pseudomonas syringae pv. syringae (strain B728a), this protein is Peptide chain release factor 3.